Consider the following 218-residue polypeptide: MAKTSTSVIAAKTLVHAAALAPIALLGWQFWQVWQSGSDALGADPVAEIEHRTGLWALRLLLITLAITPLRQLTGQAVVIRFRRMLGLYAFFYATVHLAAYLTLDLRGFWTQIFEEILKRPYITVGFAAWLLLMPLAITSTQGWMRRLKRNWGRLHMLIYPIGLLAVLHFWWLVKSDIREPALYAGILAVLLGWRVWKKLSARQTTARRSTPPPATPR.

Helical transmembrane passes span 14–34 (LVHA…WQVW), 60–80 (LLLI…AVVI), 86–106 (LGLY…TLDL), 121–141 (PYIT…ITST), and 155–175 (LHML…WLVK).

It belongs to the MsrQ family. Heterodimer of a catalytic subunit (MsrP) and a heme-binding subunit (MsrQ). It depends on FMN as a cofactor. Heme b is required as a cofactor.

The protein resides in the cell inner membrane. In terms of biological role, part of the MsrPQ system that repairs oxidized periplasmic proteins containing methionine sulfoxide residues (Met-O), using respiratory chain electrons. Thus protects these proteins from oxidative-stress damage caused by reactive species of oxygen and chlorine generated by the host defense mechanisms. MsrPQ is essential for the maintenance of envelope integrity under bleach stress, rescuing a wide series of structurally unrelated periplasmic proteins from methionine oxidation. MsrQ provides electrons for reduction to the reductase catalytic subunit MsrP, using the quinone pool of the respiratory chain. The chain is Protein-methionine-sulfoxide reductase heme-binding subunit MsrQ from Xanthomonas axonopodis pv. citri (strain 306).